A 198-amino-acid polypeptide reads, in one-letter code: Peptidyl-tRNA hydrolase (198 aa).

Residue tyrosine 16 coordinates tRNA. Residue histidine 21 is the Proton acceptor of the active site. TRNA-binding residues include phenylalanine 67, asparagine 69, and asparagine 115.

This sequence belongs to the PTH family. Monomer.

The protein localises to the cytoplasm. The enzyme catalyses an N-acyl-L-alpha-aminoacyl-tRNA + H2O = an N-acyl-L-amino acid + a tRNA + H(+). In terms of biological role, hydrolyzes ribosome-free peptidyl-tRNAs (with 1 or more amino acids incorporated), which drop off the ribosome during protein synthesis, or as a result of ribosome stalling. Functionally, catalyzes the release of premature peptidyl moieties from peptidyl-tRNA molecules trapped in stalled 50S ribosomal subunits, and thus maintains levels of free tRNAs and 50S ribosomes. This Prochlorococcus marinus (strain MIT 9301) protein is Peptidyl-tRNA hydrolase.